The following is a 392-amino-acid chain: Phosphoglycerate kinase (392 aa).

Substrate contacts are provided by residues 21 to 23 (DLN), R36, 59 to 62 (HLGR), R114, and R147. ATP is bound by residues K198, E320, and 346 to 349 (GGDT).

Belongs to the phosphoglycerate kinase family. In terms of assembly, monomer.

It localises to the cytoplasm. The catalysed reaction is (2R)-3-phosphoglycerate + ATP = (2R)-3-phospho-glyceroyl phosphate + ADP. Its pathway is carbohydrate degradation; glycolysis; pyruvate from D-glyceraldehyde 3-phosphate: step 2/5. The sequence is that of Phosphoglycerate kinase from Nitrosomonas europaea (strain ATCC 19718 / CIP 103999 / KCTC 2705 / NBRC 14298).